A 134-amino-acid chain; its full sequence is Holo-[acyl-carrier-protein] synthase (134 aa).

Residues Asp8 and Glu57 each coordinate Mg(2+).

This sequence belongs to the P-Pant transferase superfamily. AcpS family. Mg(2+) serves as cofactor.

It is found in the cytoplasm. The catalysed reaction is apo-[ACP] + CoA = holo-[ACP] + adenosine 3',5'-bisphosphate + H(+). Its function is as follows. Transfers the 4'-phosphopantetheine moiety from coenzyme A to a Ser of acyl-carrier-protein. The chain is Holo-[acyl-carrier-protein] synthase from Brucella abortus (strain S19).